Consider the following 506-residue polypeptide: Aerotaxis receptor (506 aa).

Over 1–166 the chain is Cytoplasmic; it reads MSSHPYVTQQ…PSLPLRWRAR (166 aa). The chain crosses the membrane as a helical span at residues 167–186; sequence GVMTLMFILLAAMLWFVAAP. Residues 187 to 190 are Periplasmic-facing; that stretch reads VVTY. Residues 191–209 form a helical membrane-spanning segment; the sequence is ILCALVVLLASACFEWQIV. Residues 210-506 lie on the Cytoplasmic side of the membrane; that stretch reads RPIENVAHQA…RLEDAVTVLH (297 aa). The Methyl-accepting transducer domain maps to 263–492; the sequence is QVSSVRNGSE…ESAQVSAMVK (230 aa).

This sequence belongs to the methyl-accepting chemotaxis (MCP) protein family.

It is found in the cell inner membrane. Functionally, signal transducer for aerotaxis. The aerotactic response is the accumulation of cells around air bubbles. The nature of the sensory stimulus detected by this protein is the proton motive force or cellular redox state. It uses a FAD prosthetic group as a redox sensor to monitor oxygen levels. This chain is Aerotaxis receptor (aer), found in Escherichia coli (strain K12).